A 695-amino-acid chain; its full sequence is Elongation factor G 2 (695 aa).

The region spanning 5–280 (SLYRNIGIFA…AVVDYLPSPT (276 aa)) is the tr-type G domain. GTP-binding positions include 14-21 (AHVDAGKT), 78-82 (DTPGH), and 132-135 (NKLD).

Belongs to the TRAFAC class translation factor GTPase superfamily. Classic translation factor GTPase family. EF-G/EF-2 subfamily.

It is found in the cytoplasm. Its function is as follows. Catalyzes the GTP-dependent ribosomal translocation step during translation elongation. During this step, the ribosome changes from the pre-translocational (PRE) to the post-translocational (POST) state as the newly formed A-site-bound peptidyl-tRNA and P-site-bound deacylated tRNA move to the P and E sites, respectively. Catalyzes the coordinated movement of the two tRNA molecules, the mRNA and conformational changes in the ribosome. The polypeptide is Elongation factor G 2 (Vibrio cholerae serotype O1 (strain ATCC 39315 / El Tor Inaba N16961)).